Reading from the N-terminus, the 360-residue chain is GDSL esterase/lipase At2g31550 (360 aa).

The N-terminal stretch at 1-27 (MSTSKAITLTLFITTTLLASCDAAANA) is a signal peptide. Residue Asn-26 is glycosylated (N-linked (GlcNAc...) asparagine). Ser-42 functions as the Nucleophile in the catalytic mechanism. N-linked (GlcNAc...) asparagine glycans are attached at residues Asn-104 and Asn-326. Catalysis depends on residues Asp-334 and His-337.

Belongs to the 'GDSL' lipolytic enzyme family.

It is found in the secreted. The chain is GDSL esterase/lipase At2g31550 from Arabidopsis thaliana (Mouse-ear cress).